The chain runs to 37 residues: Esculentin-2HSa (37 aa).

The cysteines at positions 31 and 37 are disulfide-linked.

As to expression, expressed by the skin glands.

It is found in the secreted. Has antibacterial activity against the Gram-positive bacterium S.aureus ATCC 25923 (MIC=32 uM) and the Gram-negative bacterium E.coli ATCC 25726 (MIC=16 uM). The protein is Esculentin-2HSa of Odorrana hosii (Hose's rock frog).